The sequence spans 680 residues: Harmonin-binding protein USHBP1 (680 aa).

Residues 1-15 (MSARATRPRSRRGRH) show a composition bias toward basic residues. Disordered stretches follow at residues 1–101 (MSAR…GPAE), 135–162 (PVEA…GQQE), and 217–250 (ASPP…DSPM). A compositionally biased stretch (basic and acidic residues) spans 76–86 (PEERREPEVEA). 3 coiled-coil regions span residues 177-219 (LGTR…EASP), 362-386 (ATNG…VAMD), and 479-506 (LADL…LRAQ). A disordered region spans residues 524–562 (LMGDGSSGGSSEDPSSEEEAGEDRQQHYQGPPALLGGQM). Residues 573–661 (QELSASLTRA…QQAEELAVLT (89 aa)) are a coiled coil.

It belongs to the MCC family. In terms of assembly, interacts via its C-terminus with the first PDZ domain of USH1C.

The polypeptide is Harmonin-binding protein USHBP1 (Rattus norvegicus (Rat)).